A 397-amino-acid polypeptide reads, in one-letter code: Acetate kinase (397 aa).

Asn-8 is a Mg(2+) binding site. Lys-15 serves as a coordination point for ATP. Arg-89 contributes to the substrate binding site. The active-site Proton donor/acceptor is the Asp-146. Residues 206–210 (HLGNG), 281–283 (DLR), and 329–333 (GVGEN) each bind ATP. Mg(2+) is bound at residue Glu-382.

This sequence belongs to the acetokinase family. As to quaternary structure, homodimer. Mg(2+) serves as cofactor. Mn(2+) is required as a cofactor.

Its subcellular location is the cytoplasm. The catalysed reaction is acetate + ATP = acetyl phosphate + ADP. It functions in the pathway metabolic intermediate biosynthesis; acetyl-CoA biosynthesis; acetyl-CoA from acetate: step 1/2. Its function is as follows. Catalyzes the formation of acetyl phosphate from acetate and ATP. Can also catalyze the reverse reaction. This chain is Acetate kinase, found in Bacillus anthracis.